The chain runs to 186 residues: Inner membrane-spanning protein YciB (186 aa).

Helical transmembrane passes span 10–30, 47–67, 76–96, 121–141, and 149–169; these read IILF…AVAI, VEPL…ATLL, WKPT…QLMF, WGWT…AYHF, and FKLF…ALYL.

Belongs to the YciB family.

It is found in the cell inner membrane. In terms of biological role, plays a role in cell envelope biogenesis, maintenance of cell envelope integrity and membrane homeostasis. In Acidovorax ebreus (strain TPSY) (Diaphorobacter sp. (strain TPSY)), this protein is Inner membrane-spanning protein YciB.